Here is a 218-residue protein sequence, read N- to C-terminus: uncharacterized protein (218 aa).

Helical transmembrane passes span L8–G28 and I158–I178.

The protein localises to the cell membrane. This is an uncharacterized protein from Mycoplasma genitalium (strain ATCC 33530 / DSM 19775 / NCTC 10195 / G37) (Mycoplasmoides genitalium).